A 325-amino-acid polypeptide reads, in one-letter code: Putative ankyrin repeat protein RF_0011 (325 aa).

3 ANK repeats span residues 63 to 94 (NGNT…AINM), 99 to 130 (RGQP…NINA), and 134 to 164 (CGRT…EMII).

The chain is Putative ankyrin repeat protein RF_0011 from Rickettsia felis (strain ATCC VR-1525 / URRWXCal2) (Rickettsia azadi).